The sequence spans 370 residues: (5-formylfuran-3-yl)methyl phosphate transaminase (370 aa).

An N6-(pyridoxal phosphate)lysine modification is found at Lys222.

The protein belongs to the class-I pyridoxal-phosphate-dependent aminotransferase family. As to quaternary structure, homodimer. It depends on pyridoxal 5'-phosphate as a cofactor.

Its subcellular location is the cytoplasm. The enzyme catalyses 4-(hydroxymethyl)-2-furancarboxaldehyde phosphate + L-alanine = [5-(aminomethyl)-3-furyl]methyl phosphate + pyruvate. The protein operates within cofactor biosynthesis; methanofuran biosynthesis. Catalyzes the transamination reaction between 4-(hydroxymethyl)-2-furancarboxaldehyde phosphate (4-HFC-P) and alanine to produce pyruvate and 5-(aminomethyl)-3-furanmethanol phosphate (F1-P), the precursor for the furan moiety in methanofuran. This chain is (5-formylfuran-3-yl)methyl phosphate transaminase, found in Methanocaldococcus jannaschii (strain ATCC 43067 / DSM 2661 / JAL-1 / JCM 10045 / NBRC 100440) (Methanococcus jannaschii).